Consider the following 751-residue polypeptide: CCR4-NOT transcription complex subunit 3 (751 aa).

The interval 240 to 534 (ATSPPSHSHM…QFSTTPEIKA (295 aa)) is disordered. The segment covering 257–268 (SSSTPTSTTSSS) has biased composition (low complexity). Residues 284 to 293 (DDKKRGRSTD) show a composition bias toward basic and acidic residues. Thr292 is modified (phosphothreonine). Polar residues predominate over residues 294 to 315 (SEVSQSPAKNGSKPVHSNQHPQ). Ser299 is modified (phosphoserine). Residues 317–330 (PAVPPTYPSGPPPT) show a composition bias toward pro residues. Residues 339 to 348 (GNNGASTPAA) are compositionally biased toward polar residues. The span at 441–450 (SSSGGSSASS) shows a compositional bias: low complexity. The segment covering 463–472 (APSTSKESST) has biased composition (polar residues). The segment covering 473–498 (AAPSGAGNVASGSGNNSGGPSLLVPL) has biased composition (low complexity). A Phosphoserine modification is found at Ser540. Residues 659–751 (EFYQRLSTET…YRYLEDRDLQ (93 aa)) are repressor domain.

Belongs to the CNOT2/3/5 family. As to quaternary structure, component of the CCR4-NOT complex; distinct complexes seem to exist that differ in the participation of probably mutually exclusive catalytic subunits. In the complex interacts directly with CNOT2. Interacts with TIP120B and NANOS2. Interacts with EBF1. Interacts in an RNA-independent manner with BICC1 (via KH domains).

It localises to the nucleus. The protein localises to the cytoplasm. It is found in the P-body. Its function is as follows. Component of the CCR4-NOT complex which is one of the major cellular mRNA deadenylases and is linked to various cellular processes including bulk mRNA degradation, miRNA-mediated repression, translational repression during translational initiation and general transcription regulation. Additional complex functions may be a consequence of its influence on mRNA expression. May be involved in metabolic regulation; may be involved in recruitment of the CCR4-NOT complex to deadenylation target mRNAs involved in energy metabolism. Involved in mitotic progression and regulation of the spindle assembly checkpoint by regulating the stability of MAD1L1 mRNA. Can repress transcription and may link the CCR4-NOT complex to transcriptional regulation; the repressive function may involve histone deacetylases. Involved in the maintenance of embryonic stem (ES) cell identity; prevents their differentiation towards extraembryonic trophectoderm lineages. The protein is CCR4-NOT transcription complex subunit 3 (Cnot3) of Mus musculus (Mouse).